Reading from the N-terminus, the 302-residue chain is tRNA pseudouridine synthase B (302 aa).

Catalysis depends on D45, which acts as the Nucleophile.

The protein belongs to the pseudouridine synthase TruB family. Type 1 subfamily.

It carries out the reaction uridine(55) in tRNA = pseudouridine(55) in tRNA. Functionally, responsible for synthesis of pseudouridine from uracil-55 in the psi GC loop of transfer RNAs. This chain is tRNA pseudouridine synthase B, found in Francisella tularensis subsp. novicida (strain U112).